The sequence spans 295 residues: MPISLPKVRGIYRYSVLMSKITWLNVGGQADILFKPRDIEDLIYLIKNTKLPISVIGATSNMIVRDSGIRGITVKLGKEFAYIKYKSNNSIIAGGAALLSNLAYFAGEQQVSGLEFLVGIPGTIGGGIEMNAGAYGSDVASVVQSIKAVNLSDGNLYEFSSKEMGYVYRGHSLKGQWIFIEAEFKGVSSGHEVILHRLKEIINKKNKSQPVRGKTAGCIFKNPRAYQAWKLIDGSGCRGLNNGGAKISKKHCNFLLNYNNATASDLENLGNKVRNTVKDKFNIELEWEIRVLGSH.

An FAD-binding PCMH-type domain is found at 26 to 189 (VGGQADILFK…IEAEFKGVSS (164 aa)). The active site involves R169. Catalysis depends on C218, which acts as the Proton donor. E288 is a catalytic residue.

It belongs to the MurB family. FAD is required as a cofactor.

The protein resides in the cytoplasm. It carries out the reaction UDP-N-acetyl-alpha-D-muramate + NADP(+) = UDP-N-acetyl-3-O-(1-carboxyvinyl)-alpha-D-glucosamine + NADPH + H(+). It participates in cell wall biogenesis; peptidoglycan biosynthesis. Cell wall formation. This is UDP-N-acetylenolpyruvoylglucosamine reductase from Wolbachia sp. subsp. Brugia malayi (strain TRS).